The chain runs to 324 residues: Glyoxylate/hydroxypyruvate reductase B (324 aa).

Residues R237 and E266 contribute to the active site. H285 acts as the Proton donor in catalysis.

The protein belongs to the D-isomer specific 2-hydroxyacid dehydrogenase family. GhrB subfamily. As to quaternary structure, homodimer.

It is found in the cytoplasm. The catalysed reaction is glycolate + NADP(+) = glyoxylate + NADPH + H(+). It catalyses the reaction (R)-glycerate + NAD(+) = 3-hydroxypyruvate + NADH + H(+). The enzyme catalyses (R)-glycerate + NADP(+) = 3-hydroxypyruvate + NADPH + H(+). Catalyzes the NADPH-dependent reduction of glyoxylate and hydroxypyruvate into glycolate and glycerate, respectively. This chain is Glyoxylate/hydroxypyruvate reductase B, found in Escherichia coli (strain K12 / MC4100 / BW2952).